Reading from the N-terminus, the 508-residue chain is MSSIDRSQPVGVKTYEVRTYGCQMNVHDSERLSGLLEDAGYVRAPDGSDGDADVVVFNTCAVRENADNRLYGNLGRLAPMKTKRPGMQIAVGGCLAQKDRDTIVTKAPWVDVVFGTHNIGKLPVLLERARVQEEAQVEIAESLEAFPSTLPTRRESAYAAWVSISVGCNNTCTFCIVPALRGKEKDRRTGDILAEIEALVGEGVSEITLLGQNVNAYGSDIGDREAFSKLLRACGQIDGLERVRFTSPHPRDFTDDVIAAMAETPNVMPQLHMPMQSGSDTVLKAMRRSYRQDRYLGIIEKVRAAIPHAAITTDIIVGFPGETEEDFEQTMHAVREARFTQAFTFQYSKRPGTPAATMENQIPKEVVQARYERLVALQEEISWDENKKQVGRTLELMVAEGEGRKDGATHRLSGRAPDNRLVHFTKPDEEVRPGDVVTVEVTYAAPHHLLAEGPVLNVRRTRAGDAWEKRHIEKTAEAAKPAGVMLGLPKIGAPEPLPVATGSGCGCD.

Positions Lys13–Val131 constitute an MTTase N-terminal domain. [4Fe-4S] cluster is bound by residues Cys22, Cys60, Cys94, Cys168, Cys172, and Cys175. Residues Arg154–Glu385 enclose the Radical SAM core domain. The TRAM domain maps to Lys387–Val455.

The protein belongs to the methylthiotransferase family. MiaB subfamily. In terms of assembly, monomer. [4Fe-4S] cluster is required as a cofactor.

Its subcellular location is the cytoplasm. The catalysed reaction is N(6)-dimethylallyladenosine(37) in tRNA + (sulfur carrier)-SH + AH2 + 2 S-adenosyl-L-methionine = 2-methylsulfanyl-N(6)-dimethylallyladenosine(37) in tRNA + (sulfur carrier)-H + 5'-deoxyadenosine + L-methionine + A + S-adenosyl-L-homocysteine + 2 H(+). In terms of biological role, catalyzes the methylthiolation of N6-(dimethylallyl)adenosine (i(6)A), leading to the formation of 2-methylthio-N6-(dimethylallyl)adenosine (ms(2)i(6)A) at position 37 in tRNAs that read codons beginning with uridine. The protein is tRNA-2-methylthio-N(6)-dimethylallyladenosine synthase of Streptomyces avermitilis (strain ATCC 31267 / DSM 46492 / JCM 5070 / NBRC 14893 / NCIMB 12804 / NRRL 8165 / MA-4680).